The following is an 88-amino-acid chain: Sec-independent protein translocase protein TatA (88 aa).

A helical transmembrane segment spans residues 3-23 (IFGVGLPEVTVILILALLIFG). A compositionally biased stretch (basic and acidic residues) spans 56–66 (MKEEDKDESPK). The disordered stretch occupies residues 56–88 (MKEEDKDESPKSIESNQSNEINQEKIDSENSNN). Over residues 67 to 76 (SIESNQSNEI) the composition is skewed to polar residues. Residues 77–88 (NQEKIDSENSNN) are compositionally biased toward basic and acidic residues.

Belongs to the TatA/E family. As to quaternary structure, forms a complex with TatC.

Its subcellular location is the cell inner membrane. Functionally, part of the twin-arginine translocation (Tat) system that transports large folded proteins containing a characteristic twin-arginine motif in their signal peptide across membranes. TatA could form the protein-conducting channel of the Tat system. This chain is Sec-independent protein translocase protein TatA, found in Prochlorococcus marinus (strain MIT 9301).